Here is a 285-residue protein sequence, read N- to C-terminus: MIINNNISAINAQRTLKFRNVDLSKDMAALSSGMRINRAGDDASGLAVSEKMRTQIRGLRQAERNNSSGISFIQTTEGYLQESQDILQRIRELAVQSANGIYTDADRMLIQVEVSQLVDEVNRIASHAQFNTLNMLTGRFSNPNEGGAPVASMWFHIGANMDERRRVYIGTMTAAALGLQTAEGTGISISSIDKANSAIGIVDEALTKVSKQRSNLPAYQNRLELTAQGLMIAYENTAASESRIRDTDMAETSVKFAKDQILSQANLAMLAQANTMNQGALRLIQ.

It belongs to the bacterial flagellin family. The flagellum consists of an outer layer composed of two sheath proteins, flaA1 (44 kDa) and flaA2 (35 kDa) around a core that contains three proteins flaB1 (37 kDa), flaB2 (34 kDa) and flaB3 (32 kDa).

Its subcellular location is the periplasmic flagellum. The protein localises to the periplasm. Component of the core of the flagella. The chain is Flagellar filament core protein flaB2 (flaB2) from Brachyspira hyodysenteriae (Treponema hyodysenteriae).